We begin with the raw amino-acid sequence, 229 residues long: Thiamine-phosphate synthase (229 aa).

Residues 38–42 (QFREK) and N73 each bind 4-amino-2-methyl-5-(diphosphooxymethyl)pyrimidine. Residues D74 and D93 each contribute to the Mg(2+) site. S111 lines the 4-amino-2-methyl-5-(diphosphooxymethyl)pyrimidine pocket. 137-139 (TLS) provides a ligand contact to 2-[(2R,5Z)-2-carboxy-4-methylthiazol-5(2H)-ylidene]ethyl phosphate. 4-amino-2-methyl-5-(diphosphooxymethyl)pyrimidine is bound at residue K140. 2-[(2R,5Z)-2-carboxy-4-methylthiazol-5(2H)-ylidene]ethyl phosphate contacts are provided by residues G169 and 189–190 (IS).

The protein belongs to the thiamine-phosphate synthase family. Mg(2+) is required as a cofactor.

The catalysed reaction is 2-[(2R,5Z)-2-carboxy-4-methylthiazol-5(2H)-ylidene]ethyl phosphate + 4-amino-2-methyl-5-(diphosphooxymethyl)pyrimidine + 2 H(+) = thiamine phosphate + CO2 + diphosphate. It carries out the reaction 2-(2-carboxy-4-methylthiazol-5-yl)ethyl phosphate + 4-amino-2-methyl-5-(diphosphooxymethyl)pyrimidine + 2 H(+) = thiamine phosphate + CO2 + diphosphate. It catalyses the reaction 4-methyl-5-(2-phosphooxyethyl)-thiazole + 4-amino-2-methyl-5-(diphosphooxymethyl)pyrimidine + H(+) = thiamine phosphate + diphosphate. Its pathway is cofactor biosynthesis; thiamine diphosphate biosynthesis; thiamine phosphate from 4-amino-2-methyl-5-diphosphomethylpyrimidine and 4-methyl-5-(2-phosphoethyl)-thiazole: step 1/1. In terms of biological role, condenses 4-methyl-5-(beta-hydroxyethyl)thiazole monophosphate (THZ-P) and 2-methyl-4-amino-5-hydroxymethyl pyrimidine pyrophosphate (HMP-PP) to form thiamine monophosphate (TMP). The sequence is that of Thiamine-phosphate synthase from Streptococcus suis (strain 98HAH33).